A 538-amino-acid chain; its full sequence is Zinc finger protein with KRAB and SCAN domains 3 (538 aa).

S42 bears the Phosphoserine mark. One can recognise an SCAN box domain in the interval 46–128 (RERFRGFRYP…VLLEYLERQL (83 aa)). K171 is covalently cross-linked (Glycyl lysine isopeptide (Lys-Gly) (interchain with G-Cter in SUMO2)). T207 is subject to Phosphothreonine. The KRAB domain occupies 214 to 274 (LKVEDVALTL…PAEELPEKEH (61 aa)). Residues 226-236 (EWTQQDSSQGN) show a composition bias toward polar residues. Positions 226–274 (EWTQQDSSQGNLCRDEKQENHGSLVSLGDEKQTKSRDLPPAEELPEKEH) are disordered. A compositionally biased stretch (basic and acidic residues) spans 253 to 274 (GDEKQTKSRDLPPAEELPEKEH). 5 consecutive C2H2-type zinc fingers follow at residues 314–336 (HICH…RRIH), 342–364 (YECE…QRVH), 370–392 (YECE…QRTH), 398–420 (YECD…HRIH), and 426–448 (YQCS…QRIH). A Phosphothreonine modification is found at T449. C2H2-type zinc fingers lie at residues 480–502 (YKCN…QKIH) and 508–530 (YQCN…QRSH).

It belongs to the krueppel C2H2-type zinc-finger protein family.

The protein resides in the nucleus. The protein localises to the cytoplasm. Functionally, transcriptional factor that binds to the consensus sequence 5'-[GT][AG][AGT]GGGG-3' and acts as a repressor of autophagy. Specifically represses expression of genes involved in autophagy and lysosome biogenesis/function such as MAP1LC3B, ULK1 or WIPI2. Associates with chromatin at the ITGB4 and VEGF promoters. Also acts as a transcription activator and promotes cancer cell progression and/or migration in various tumors and myelomas. In Homo sapiens (Human), this protein is Zinc finger protein with KRAB and SCAN domains 3 (ZKSCAN3).